A 151-amino-acid polypeptide reads, in one-letter code: Proteolipid protein 2 (151 aa).

Residues 19 to 137 (FSRTKKGILL…DAYITFPLKQ (119 aa)) form the MARVEL domain. The next 4 helical transmembrane spans lie at 25–45 (GILL…FSAS), 48–68 (AYSS…VFYM), 85–105 (FFRS…VLVE), and 112–132 (IVAG…AYIT).

It is found in the membrane. May play a role in cell differentiation in the intestinal epithelium. This chain is Proteolipid protein 2 (Plp2), found in Rattus norvegicus (Rat).